Consider the following 66-residue polypeptide: Period circadian protein (66 aa).

The interval 1 to 66 (EGSGGSGSSG…VTLTESLLNK (66 aa)) is disordered. The span at 9–31 (SGNFTTGSNIHMSSVTNTSNAGT) shows a compositional bias: low complexity. 4 tandem repeats follow at residues 30–31 (GT), 32–33 (GT), 35–36 (GT), and 37–38 (GN). Residues 30–53 (GTGTSGTGNSGGGSGGGTGPGSGA) are 4 X 2 AA tandem repeats of G-[TN]. Residues 32–51 (GTSGTGNSGGGSGGGTGPGS) are compositionally biased toward gly residues.

In terms of assembly, forms a heterodimer with timeless (TIM); the complex then translocates into the nucleus. Phosphorylated with a circadian rhythmicity, probably by the double-time protein (dbt). Phosphorylation could be implicated in the stability of per monomer and in the formation of heterodimer per-tim.

Its subcellular location is the nucleus. It is found in the cytoplasm. The protein localises to the perinuclear region. Its function is as follows. Essential for biological clock functions. Determines the period length of circadian and ultradian rhythms; an increase in PER dosage leads to shortened circadian rhythms and a decrease leads to lengthened circadian rhythms. Essential for the circadian rhythmicity of locomotor activity, eclosion behavior, and for the rhythmic component of the male courtship song that originates in the thoracic nervous system. The biological cycle depends on the rhythmic formation and nuclear localization of the TIM-PER complex. Light induces the degradation of TIM, which promotes elimination of PER. Nuclear activity of the heterodimer coordinatively regulates PER and TIM transcription through a negative feedback loop. Behaves as a negative element in circadian transcriptional loop. Does not appear to bind DNA, suggesting indirect transcriptional inhibition. In Drosophila saltans (Fruit fly), this protein is Period circadian protein (per).